Consider the following 250-residue polypeptide: Methionine aminopeptidase (250 aa).

His77 provides a ligand contact to substrate. Positions 94, 105, and 169 each coordinate a divalent metal cation. His176 provides a ligand contact to substrate. A divalent metal cation contacts are provided by Glu202 and Glu235.

The protein belongs to the peptidase M24A family. Methionine aminopeptidase type 1 subfamily. As to quaternary structure, monomer. The cofactor is Co(2+). It depends on Zn(2+) as a cofactor. Mn(2+) is required as a cofactor. Fe(2+) serves as cofactor.

The enzyme catalyses Release of N-terminal amino acids, preferentially methionine, from peptides and arylamides.. In terms of biological role, removes the N-terminal methionine from nascent proteins. The N-terminal methionine is often cleaved when the second residue in the primary sequence is small and uncharged (Met-Ala-, Cys, Gly, Pro, Ser, Thr, or Val). Requires deformylation of the N(alpha)-formylated initiator methionine before it can be hydrolyzed. This is Methionine aminopeptidase from Mycoplasmoides gallisepticum (strain R(low / passage 15 / clone 2)) (Mycoplasma gallisepticum).